Here is a 620-residue protein sequence, read N- to C-terminus: Glutathione-regulated potassium-efflux system protein KefC (620 aa).

Transmembrane regions (helical) follow at residues 4-24 (HTLL…PIAV), 26-46 (LGLG…PWGL), 54-74 (SILH…GLEL), 90-110 (GALQ…FLGL), 114-134 (VAEL…MQAM), 149-169 (FAVL…IPLL), 178-198 (LGAF…VVLL), 218-238 (VFSA…EEVG), 270-290 (GLLL…GTLV), 294-314 (LRIL…LWLV), 327-347 (WFAV…GAAQ), and 359-379 (ALTL…VLLT). In terms of domain architecture, RCK N-terminal spans 399 to 518 (QPRVIVAGFG…AGVAMPERET (120 aa)). The disordered stretch occupies residues 599 to 620 (QGTAEGKHSGEAADEPEVKPSI).

This sequence belongs to the monovalent cation:proton antiporter 2 (CPA2) transporter (TC 2.A.37) family. KefC subfamily. In terms of assembly, homodimer. Interacts with the regulatory subunit KefF.

Its subcellular location is the cell inner membrane. Functionally, pore-forming subunit of a potassium efflux system that confers protection against electrophiles. Catalyzes K(+)/H(+) antiport. The chain is Glutathione-regulated potassium-efflux system protein KefC from Salmonella dublin (strain CT_02021853).